A 120-amino-acid chain; its full sequence is U15-barytoxin-Tl1c (120 aa).

The N-terminal stretch at M1 to A16 is a signal peptide. 4 disulfide bridges follow: C55-C73, C66-C79, C70-C118, and C72-C89.

It belongs to the neurotoxin 03 (Tx2) family. 03 subfamily. In terms of tissue distribution, expressed by the venom gland.

Its subcellular location is the secreted. Functionally, ion channel inhibitor. In Trittame loki (Brush-footed trapdoor spider), this protein is U15-barytoxin-Tl1c.